The primary structure comprises 157 residues: MNIKLIAIGKTDNKNLQTLIDDYTKRLSFYIKFDLEIIADIKNVKNLSETQQKEKEGELILSKITPTDQLILLDENGKTFSSVAFSDQLQKKMNSGIKTLVFVIGGPYGFSDDVYKKTFGKISLSQMTFSHQMVRLFFIEQLYRGFTILKNEPYHHQ.

Residues Leu-73, Gly-105, and 124–129 (LSQMTF) each bind S-adenosyl-L-methionine.

It belongs to the RNA methyltransferase RlmH family. Homodimer.

It localises to the cytoplasm. It carries out the reaction pseudouridine(1915) in 23S rRNA + S-adenosyl-L-methionine = N(3)-methylpseudouridine(1915) in 23S rRNA + S-adenosyl-L-homocysteine + H(+). Specifically methylates the pseudouridine at position 1915 (m3Psi1915) in 23S rRNA. The polypeptide is Ribosomal RNA large subunit methyltransferase H (Flavobacterium psychrophilum (strain ATCC 49511 / DSM 21280 / CIP 103535 / JIP02/86)).